Reading from the N-terminus, the 330-residue chain is MSQNTLKVHDLNEDAEFDENGVEVFDEKALVEQEPSDNDLAEEELLSQGATQRVLDATQLYLGEIGYSPLLTAEEEVYFARRALRGDVASRRRMIESNLRLVVKIARRYGNRGLALLDLIEEGNLGLIRAVEKFDPERGFRFSTYATWWIRQTIERAIMNQTRTIRLPIHIVKELNVYLRTARELSHKLDHEPSAEEIAEQLDKPVDDVSRMLRLNERITSVDTPLGGDSEKALLDILADEKENGPEDTTQDDDMKQSIVKWLFELNAKQREVLARRFGLLGYEAATLEDVGREIGLTRERVRQIQVEGLRRLREILQTQGLNIEALFRE.

Positions 56 to 89 are sigma-70 factor domain-1; sequence DATQLYLGEIGYSPLLTAEEEVYFARRALRGDVA. Residues 94 to 164 are sigma-70 factor domain-2; sequence MIESNLRLVV…ERAIMNQTRT (71 aa). An Interaction with polymerase core subunit RpoC motif is present at residues 118-121; that stretch reads DLIE. The interval 174–249 is sigma-70 factor domain-3; it reads ELNVYLRTAR…DEKENGPEDT (76 aa). A sigma-70 factor domain-4 region spans residues 262 to 315; sequence WLFELNAKQREVLARRFGLLGYEAATLEDVGREIGLTRERVRQIQVEGLRRLRE. The H-T-H motif DNA-binding region spans 288 to 307; that stretch reads LEDVGREIGLTRERVRQIQV.

The protein belongs to the sigma-70 factor family. RpoS subfamily. Interacts with the RNA polymerase core enzyme and RssB.

The protein resides in the cytoplasm. Its function is as follows. Sigma factors are initiation factors that promote the attachment of RNA polymerase to specific initiation sites and are then released. This sigma factor is the master transcriptional regulator of the stationary phase and the general stress response. Controls, positively or negatively, the expression of several hundred genes, which are mainly involved in metabolism, transport, regulation and stress management. Protects stationary phase cells from killing induced by endoribonuclease MazF. The sequence is that of RNA polymerase sigma factor RpoS from Escherichia coli (strain K12).